The sequence spans 532 residues: Probable cytochrome c oxidase subunit 1 (532 aa).

8 helical membrane passes run 33–53 (IMYI…SLLF), 74–94 (VLIT…ALFG), 95–115 (GFGN…FPRL), 118–138 (ISFW…FVDG), 163–183 (MAIF…INLI), 200–220 (PLFV…MPVL), 252–272 (LFWF…FGIV), and 284–304 (IFGY…GFIV). Histidine 79 serves as a coordination point for Fe(II)-heme a. The Cu cation site is built by histidine 258 and tyrosine 262. Residues histidine 307 and histidine 308 each contribute to the Cu cation site. 2 helical membrane passes run 318-338 (ALIY…IKIF) and 355-375 (MLFS…GIIL). A heme a3-binding site is contributed by histidine 393. Helical transmembrane passes span 394-414 (FHYT…YYWF), 431-451 (FWIT…LGLA), and 473-493 (IGAG…FYTL). Residue histidine 395 participates in Fe(II)-heme a binding.

It belongs to the heme-copper respiratory oxidase family.

The protein resides in the cell membrane. It catalyses the reaction 4 Fe(II)-[cytochrome c] + O2 + 8 H(+)(in) = 4 Fe(III)-[cytochrome c] + 2 H2O + 4 H(+)(out). It functions in the pathway energy metabolism; oxidative phosphorylation. In terms of biological role, cytochrome c oxidase is the component of the respiratory chain that catalyzes the reduction of oxygen to water. Subunits 1-3 form the functional core of the enzyme complex. CO I is the catalytic subunit of the enzyme. Electrons originating in cytochrome c are transferred via the copper A center of subunit 2 and heme A of subunit 1 to the bimetallic center formed by heme A3 and copper B. This chain is Probable cytochrome c oxidase subunit 1 (ctaD), found in Rickettsia felis (strain ATCC VR-1525 / URRWXCal2) (Rickettsia azadi).